Here is a 45-residue protein sequence, read N- to C-terminus: Large ribosomal subunit protein bL34 (45 aa).

The tract at residues 26–45 (RAGRSILSARRSKGRSQLSA) is disordered.

This sequence belongs to the bacterial ribosomal protein bL34 family.

This chain is Large ribosomal subunit protein bL34, found in Parafrankia sp. (strain EAN1pec).